The following is a 363-amino-acid chain: Succinyl-diaminopimelate desuccinylase (363 aa).

A Zn(2+)-binding site is contributed by histidine 63. Residue aspartate 65 is part of the active site. Aspartate 94 contributes to the Zn(2+) binding site. Glutamate 123 serves as the catalytic Proton acceptor. Glutamate 124, glutamate 152, and histidine 337 together coordinate Zn(2+).

The protein belongs to the peptidase M20A family. DapE subfamily. In terms of assembly, homodimer. It depends on Zn(2+) as a cofactor. Requires Co(2+) as cofactor.

The catalysed reaction is N-succinyl-(2S,6S)-2,6-diaminopimelate + H2O = (2S,6S)-2,6-diaminopimelate + succinate. It functions in the pathway amino-acid biosynthesis; L-lysine biosynthesis via DAP pathway; LL-2,6-diaminopimelate from (S)-tetrahydrodipicolinate (succinylase route): step 3/3. Its function is as follows. Catalyzes the hydrolysis of N-succinyl-L,L-diaminopimelic acid (SDAP), forming succinate and LL-2,6-diaminopimelate (DAP), an intermediate involved in the bacterial biosynthesis of lysine and meso-diaminopimelic acid, an essential component of bacterial cell walls. This chain is Succinyl-diaminopimelate desuccinylase, found in Campylobacter concisus (strain 13826).